A 410-amino-acid polypeptide reads, in one-letter code: Calsequestrin-2 (410 aa).

A signal peptide spans 1 to 19 (MKRTHLFIAGLYLLASCRA). Residues 221–242 (MDEPIAIPDKPYTEEELVEFVK) are calcium regulated hydrophobic site. A Phosphotyrosine modification is found at Tyr282. Asn335 and Asn395 each carry an N-linked (GlcNAc...) asparagine glycan. Positions 364 to 410 (DVLSGKINTEDDDNEEGDDGDDDEDDDDDDGNNSDEESNDDSDDDDE) are disordered. The segment covering 373-410 (EDDDNEEGDDGDDDEDDDDDDGNNSDEESNDDSDDDDE) has biased composition (acidic residues). A phosphoserine; by CK2 mark is found at Ser397, Ser401, and Ser405.

This sequence belongs to the calsequestrin family. As to quaternary structure, interacts with ASPH. Monomer, homodimer and homooligomer. Mostly monomeric in the absence of calcium. Forms higher oligomers in a calcium-dependent manner. Dimers associate to form tetramers, that then form linear homomer chains. Interacts with TRDN. Post-translationally, phosphorylation in the C-terminus, probably by CK2, moderately increases calcium buffering capacity. In terms of processing, N-glycosylated. Detected in heart muscle (at protein level).

The protein resides in the sarcoplasmic reticulum lumen. Its function is as follows. Calsequestrin is a high-capacity, moderate affinity, calcium-binding protein and thus acts as an internal calcium store in muscle. Calcium ions are bound by clusters of acidic residues at the protein surface, especially at the interface between subunits. Can bind around 60 Ca(2+) ions. Regulates the release of lumenal Ca(2+) via the calcium release channel RYR2; this plays an important role in triggering muscle contraction. Plays a role in excitation-contraction coupling in the heart and in regulating the rate of heart beats. This chain is Calsequestrin-2 (CASQ2), found in Canis lupus familiaris (Dog).